We begin with the raw amino-acid sequence, 87 residues long: Anaphase-promoting complex subunit 11 (87 aa).

An RING-type; atypical zinc finger spans residues 35-77; that stretch reads CVDCKIPGDDCPPVWGVCNHAFHMHCILKWLNANELQQCPMCR.

It belongs to the RING-box family. The APC/C is composed of at least 13 subunits that stay tightly associated throughout the cell cycle: anapc1, anapc2, anapc3, anapc4, anapc5, anapc6, anapc7, anapc8, anapc10, anapc11, cdc20, cdc26 and cdh1.

Its subcellular location is the nucleus. The protein operates within protein modification; protein ubiquitination. Its function is as follows. Component of the anaphase promoting complex/cyclosome (APC/C), a cell cycle-regulated E3 ubiquitin-protein ligase complex that controls progression through mitosis and the G1 phase of the cell cycle. The chain is Anaphase-promoting complex subunit 11 (anapc11) from Dictyostelium discoideum (Social amoeba).